The chain runs to 669 residues: Protein adenylyltransferase SelO, mitochondrial (669 aa).

Residues methionine 1–glutamate 115 constitute a mitochondrion transit peptide. The ATP site is built by glycine 153, glycine 155, lysine 176, aspartate 188, glycine 189, arginine 246, and arginine 253. Catalysis depends on aspartate 338, which acts as the Proton acceptor. Residues asparagine 339 and aspartate 348 each contribute to the Mg(2+) site. Position 348 (aspartate 348) interacts with ATP. Residues alanine 634 to serine 654 are disordered. A Phosphothreonine modification is found at threonine 635. The residue at position 653 (serine 653) is a Phosphoserine. A non-standard amino acid (selenocysteine) is located at residue selenocysteine 667.

It belongs to the SELO family. It depends on Mg(2+) as a cofactor.

It is found in the mitochondrion. The enzyme catalyses L-tyrosyl-[protein] + ATP = O-(5'-adenylyl)-L-tyrosyl-[protein] + diphosphate. The catalysed reaction is L-threonyl-[protein] + ATP = 3-O-(5'-adenylyl)-L-threonyl-[protein] + diphosphate. It carries out the reaction L-seryl-[protein] + ATP = 3-O-(5'-adenylyl)-L-seryl-[protein] + diphosphate. Functionally, catalyzes the transfer of adenosine 5'-monophosphate (AMP) to Ser, Thr and Tyr residues of target proteins (AMPylation). May be a redox-active mitochondrial selenoprotein which interacts with a redox target protein. In Homo sapiens (Human), this protein is Protein adenylyltransferase SelO, mitochondrial.